The following is a 207-amino-acid chain: Holliday junction branch migration complex subunit RuvA (207 aa).

The segment at 1–71 is domain I; the sequence is MIVSIAGKLV…RLTPRLIGFS (71 aa). Positions 72–149 are domain II; it reads TLPERQFFDL…RFALMVAGGE (78 aa). The segment at 150–155 is flexible linker; sequence VADAME. The segment at 156-207 is domain III; it reads VESPIVSDTYDALVTLGHSESDARKLIDETLATGKKFKDTESLLTAIYQRSK.

It belongs to the RuvA family. Homotetramer. Forms an RuvA(8)-RuvB(12)-Holliday junction (HJ) complex. HJ DNA is sandwiched between 2 RuvA tetramers; dsDNA enters through RuvA and exits via RuvB. An RuvB hexamer assembles on each DNA strand where it exits the tetramer. Each RuvB hexamer is contacted by two RuvA subunits (via domain III) on 2 adjacent RuvB subunits; this complex drives branch migration. In the full resolvosome a probable DNA-RuvA(4)-RuvB(12)-RuvC(2) complex forms which resolves the HJ.

The protein resides in the cytoplasm. Its function is as follows. The RuvA-RuvB-RuvC complex processes Holliday junction (HJ) DNA during genetic recombination and DNA repair, while the RuvA-RuvB complex plays an important role in the rescue of blocked DNA replication forks via replication fork reversal (RFR). RuvA specifically binds to HJ cruciform DNA, conferring on it an open structure. The RuvB hexamer acts as an ATP-dependent pump, pulling dsDNA into and through the RuvAB complex. HJ branch migration allows RuvC to scan DNA until it finds its consensus sequence, where it cleaves and resolves the cruciform DNA. This chain is Holliday junction branch migration complex subunit RuvA, found in Rhodopirellula baltica (strain DSM 10527 / NCIMB 13988 / SH1).